The following is a 529-amino-acid chain: Isoleucine--tRNA ligase (529 aa).

Glu482 is a binding site for L-isoleucyl-5'-AMP. The short motif at 523-527 is the 'KMSKS' region element; sequence KMSKS. Lys526 lines the ATP pocket.

Belongs to the class-I aminoacyl-tRNA synthetase family. IleS type 1 subfamily. As to quaternary structure, monomer.

Its subcellular location is the cytoplasm. The catalysed reaction is tRNA(Ile) + L-isoleucine + ATP = L-isoleucyl-tRNA(Ile) + AMP + diphosphate. In terms of biological role, catalyzes the attachment of isoleucine to tRNA(Ile). As IleRS can inadvertently accommodate and process structurally similar amino acids such as valine, to avoid such errors it has two additional distinct tRNA(Ile)-dependent editing activities. One activity is designated as 'pretransfer' editing and involves the hydrolysis of activated Val-AMP. The other activity is designated 'posttransfer' editing and involves deacylation of mischarged Val-tRNA(Ile). The sequence is that of Isoleucine--tRNA ligase (ileS) from Aquifex pyrophilus.